A 372-amino-acid chain; its full sequence is Gibberellin 20 oxidase 1 (372 aa).

The Fe2OG dioxygenase domain maps to 209-309 (RNDSIMRLNY…RRSLAFFLCP (101 aa)). Fe cation-binding residues include His234, Asp236, and His290. Residue Arg300 is part of the active site.

This sequence belongs to the iron/ascorbate-dependent oxidoreductase family. GA20OX subfamily. It depends on Fe(2+) as a cofactor. The cofactor is L-ascorbate. Preferentially expressed in reproductive organs. Expressed in the epithelium of embryos and the tapetum of anthers. Expressed at low levels in the shoot apical meristem.

The enzyme catalyses gibberellin A12 + 2 2-oxoglutarate + 3 O2 + H(+) = gibberellin A9 + 2 succinate + 3 CO2 + 2 H2O. The catalysed reaction is gibberellin A53 + 2 2-oxoglutarate + 3 O2 + H(+) = gibberellin A20 + 2 succinate + 3 CO2 + 2 H2O. Its function is as follows. Key oxidase enzyme in the biosynthesis of gibberellin. Catalyzes the conversion of GA12 and GA53 to GA9 and GA20 respectively, via a three-step oxidation at C-20 of the GA skeleton. The protein is Gibberellin 20 oxidase 1 of Oryza sativa subsp. japonica (Rice).